Reading from the N-terminus, the 614-residue chain is MKNSNERLNDAFYALKKATCSVRKSVPGVYKMFGTEDRLLYVGKAKDLKKRLSSYLSINRMSVNVYTMVKQIVRLEITVTENETEALLLEAKLIKSLKPKYNIIMRDDKFYPYILFSKHKYPRIVLHREKRSEGRYTGLYGPFLSSVMTRHIIATIKKAFLLRSCPDNFFATRARPCIEYEIKNCSAPCMQKITEEDYAKAVQMAHKALTGQSKEIQCELFEMMCRFSNNQDYESAIVCRDRLHALKSMKECMGFQTGIHGDVDFIAVYKRQDLYCMQVVFFRDGVNYGSQPYFIESVGNASDADIVNMFMLQIYNDFPSVVYVDLPSDYDTNIMSTAIKQLMKREVDIRLPATRDELKAMGLARNYAMEALNRRVRNTAQDTDLEEFATFFDLLKAPERIEIYDNSHISGTHPYGVMVVCGKDGLLKKEYRKFKINTVTNGDDCSMMHEVISRRFKEIPDVLPDFILIDGGRGQRSAVYGELSRLGIPFACIAKGPGRVAGTEVFYFSNGEKLSLDPASKLMHFLCRLRDEAHRFAITSHRKSRDGKLQFSTLLNDIPGIGKTKGKAILAYFGSIQAMKHARVEEISKVPGISLKLAKRVADYLKESQTTLRA.

The GIY-YIG domain occupies 25–103; it reads SVPGVYKMFG…IKSLKPKYNI (79 aa). Residues 214–249 form the UVR domain; the sequence is KEIQCELFEMMCRFSNNQDYESAIVCRDRLHALKSM.

It belongs to the UvrC family. Interacts with UvrB in an incision complex.

Its subcellular location is the cytoplasm. In terms of biological role, the UvrABC repair system catalyzes the recognition and processing of DNA lesions. UvrC both incises the 5' and 3' sides of the lesion. The N-terminal half is responsible for the 3' incision and the C-terminal half is responsible for the 5' incision. This Anaplasma phagocytophilum (strain HZ) protein is UvrABC system protein C.